A 76-amino-acid chain; its full sequence is Kappa-actitoxin-Avd4d (76 aa).

An N-terminal signal peptide occupies residues M1–A19. Positions A20–F31 are excised as a propeptide. Intrachain disulfides connect C37/C72, C39/C65, and C55/C73.

This sequence belongs to the sea anemone type 3 (BDS) potassium channel toxin family. Moderately expressed in the ectodermal tissue from the distal and proximal tentacles, body wall, and oral disk.

The protein localises to the secreted. Its subcellular location is the nematocyst. Its function is as follows. Blocks Kv3 voltage-gated potassium channels. Reduces blood pressure. This chain is Kappa-actitoxin-Avd4d, found in Anemonia viridis (Snakelocks anemone).